Reading from the N-terminus, the 602-residue chain is Pro-neuregulin-1, membrane-bound isoform (602 aa).

Over 1–206 the chain is Extracellular; that stretch reads MWATSEGPLQ…MEAEELYQKR (206 aa). Residue Asn21 is glycosylated (N-linked (GlcNAc...) asparagine). The 95-residue stretch at 29–123 folds into the Ig-like C2-type domain; sequence PKLKEMKNQE…DSTKASVIIT (95 aa). Cysteines 49 and 105 form a disulfide. 2 N-linked (GlcNAc...) asparagine glycosylation sites follow: Asn113 and Asn126. Residues 137–181 enclose the EGF-like domain; it reads HLTKCDIKQKAFCVNGGECYMVKDLPNPPRYLCRCPNEFTGDRCQ. Disulfide bonds link Cys141-Cys155, Cys149-Cys169, and Cys171-Cys180. The helical transmembrane segment at 207–229 threads the bilayer; the sequence is VLTITGICIALLVVGIMCVVAYC. Residues 230–602 are Cytoplasmic-facing; it reads KTKKQRKKLH…VIANQDPIAV (373 aa). Disordered stretches follow at residues 293–366, 391–421, 460–479, and 486–553; these read ETSF…EGNS, MTTP…PVSS, FNSF…PSPL, and EYET…FLSI. Low complexity predominate over residues 294-314; sequence TSFSTSHYTSTTHHSMTVTQT. Over residues 315-324 the composition is skewed to polar residues; the sequence is PSHSWSNGHT. A compositionally biased stretch (low complexity) spans 325 to 341; the sequence is ESILSESHSVLVSSSVE. The span at 460–474 shows a compositional bias: polar residues; sequence FNSFHNNPTHESNSL. Residues 504–514 are compositionally biased toward basic residues; it reads TNSRRVKRTKP. The segment covering 527 to 536 has biased composition (low complexity); the sequence is DTSSQSTSSE.

The protein belongs to the neuregulin family. Post-translationally, proteolytic cleavage close to the plasma membrane on the external face leads to the release of the soluble growth factor form. Extensive glycosylation precedes the proteolytic cleavage.

It is found in the cell membrane. The protein resides in the secreted. In terms of biological role, direct ligand for the ERBB tyrosine kinase receptors. The multiple isoforms perform diverse functions: cysteine-rich domain containing isoforms (isoform 2-isoform 4) probably regulate the expression of nicotinic acetylcholine receptors at developing interneuronal synapses. Isoform Ig-NRG is required for the initial induction and/or maintenance of the mature levels of acetylcholine receptors at neuromuscular synapses. Binds to ERBB3 and integrins to form a complex which is essential for NRG1-ERBB signaling. The sequence is that of Pro-neuregulin-1, membrane-bound isoform (NRG1) from Gallus gallus (Chicken).